Reading from the N-terminus, the 372-residue chain is MSDKINLMNLTRQQMRAFFQELGEKPFRADQLVKWIYHFGEDNFDHMTNINKKLREKLKTVAEIKAPEIAVEQRSADGTIKWAMQVGDQQVETVYIPETDRATLCVSSQVGCALACTFCSTAQQGFNRNLTVSEIIGQVWRASKIIGNFGVTGVRPITNVVMMGMGEPLLNVANVVPAMEIMLDDFAYGLSKRRVTLSTSGVVPALDKLSEMIDVALAISLHAPNDELRNEIVPINKKYNIKMLMESVNRYLNVSNANHGKVTIEYVMLDHINDGTEHAHQLAEVLKNTPCKINLIPWNPFPDAPYAKSSNTRIDRFQKTLMEYGFTVILRKTRGDDIDAACGQLAGDVIDRTKRTAQKKRFGKEIGTHQIY.

Glu92 serves as the catalytic Proton acceptor. Residues 98–337 (ETDRATLCVS…VILRKTRGDD (240 aa)) form the Radical SAM core domain. An intrachain disulfide couples Cys105 to Cys342. Residues Cys112, Cys116, and Cys119 each coordinate [4Fe-4S] cluster. Residues 166 to 167 (GE), Ser198, 220 to 222 (SLH), and Asn299 each bind S-adenosyl-L-methionine. Cys342 functions as the S-methylcysteine intermediate in the catalytic mechanism.

This sequence belongs to the radical SAM superfamily. RlmN family. [4Fe-4S] cluster is required as a cofactor.

The protein resides in the cytoplasm. The catalysed reaction is adenosine(2503) in 23S rRNA + 2 reduced [2Fe-2S]-[ferredoxin] + 2 S-adenosyl-L-methionine = 2-methyladenosine(2503) in 23S rRNA + 5'-deoxyadenosine + L-methionine + 2 oxidized [2Fe-2S]-[ferredoxin] + S-adenosyl-L-homocysteine. It carries out the reaction adenosine(37) in tRNA + 2 reduced [2Fe-2S]-[ferredoxin] + 2 S-adenosyl-L-methionine = 2-methyladenosine(37) in tRNA + 5'-deoxyadenosine + L-methionine + 2 oxidized [2Fe-2S]-[ferredoxin] + S-adenosyl-L-homocysteine. Functionally, specifically methylates position 2 of adenine 2503 in 23S rRNA and position 2 of adenine 37 in tRNAs. m2A2503 modification seems to play a crucial role in the proofreading step occurring at the peptidyl transferase center and thus would serve to optimize ribosomal fidelity. This Histophilus somni (strain 129Pt) (Haemophilus somnus) protein is Dual-specificity RNA methyltransferase RlmN.